The following is a 317-amino-acid chain: HTH-type transcriptional regulator CfxR (317 aa).

The HTH lysR-type domain occupies 8–65 (LTLRQLQIFVTVARHASFVRAAEELHLTQPAVSMQVKQLESVVGMALFERVKGQLTLT). The H-T-H motif DNA-binding region spans 25–44 (FVRAAEELHLTQPAVSMQVK).

The protein belongs to the LysR transcriptional regulatory family.

Trans-acting transcriptional regulator of RuBisCO genes (cfxLS) expression. The protein is HTH-type transcriptional regulator CfxR (cfxR) of Cupriavidus necator (strain ATCC 17699 / DSM 428 / KCTC 22496 / NCIMB 10442 / H16 / Stanier 337) (Ralstonia eutropha).